Reading from the N-terminus, the 598-residue chain is MLFLVISQTTSFMITVRQFTFTIFKFQFMATSNVSSRVNELLEAVKKEFEDICQKTKTVEAQKDDFEYKAMISAQINEMALMKQTVMDLEMQQSKVKDRYEEEITSLKAQLEARRKEIASGVVPQSSKTKHGRNSVSFGKYGNAGPFNSDNSSKPLILNNGSSGGTPKNLRSPAIDSDGTVLAPIQTSNVDLGSQYYSSPHVRPAVGATMAGSAMRTFPSNLPLGHPPPPSDSANSSVTPIAAPLVVNGKVSGNPPYPAEIIPTSNVPNREEKDWTVTSNVPNKEPPISVQLLHTLEHTSVICYVRFSADGKFLATGCNRAAMVFNVETGKLITLLQEESSKREGDLYVRSVAFSPDGKYLATGVEDQQIRIWDIAQKRVYRLLTGHEQEIYSLDFSKDGKTLVSGSGDRTVCLWDVEAGEQKLILHTDDGVTTVMFSPDGQFIAAGSLDKVIRIWTSSGTLVEQLHGHEESVYSVAFSPDGKYLVSGSLDNTIKLWELQCVSNVAPSMYKEGGICKQTFTGHKDFILSVTVSPDGKWIISGSKDRTIQFWSPDSPHSQLTLQGHNNSVISVAVSPNGHCFATGSGDLRARIWSYEDL.

Positions Ile118 to Ser177 are disordered. 7 WD repeats span residues Glu285–Phe325, Leu332–Arg371, Asp374–Cys413, Trp415–Arg454, Trp456–Lys495, Tyr510–Gln549, and Ser552–Ser585.

This sequence belongs to the WD repeat TUP1 family.

Functionally, transcriptional repressor. This is Transcriptional repressor tup12 (tup12) from Schizosaccharomyces pombe (strain 972 / ATCC 24843) (Fission yeast).